The chain runs to 217 residues: MGQKVCAHGFRVGPTLIKGWDSVLYAEKHYKTLFIQDLKIRDLINNSFNQAQISRVLIERPSNKSIIININAKKPNVIIGRSGNEIDKLKKAIEKMTYLQEVYINIHEVRKFNIDAAIVAQTIALQLEKRVSFRKAMKTAIQASFKQGGQGIRVSCSGRLGGAEIARTEWYIEGRMPLHTLRADIDYSTAEAITTYGVIGVKVWIYKGEYTANKRYN.

The 71-residue stretch at 40–110 folds into the KH type-2 domain; it reads IRDLINNSFN…EVYINIHEVR (71 aa).

Belongs to the universal ribosomal protein uS3 family. As to quaternary structure, part of the 30S ribosomal subunit. Forms a tight complex with proteins S10 and S14.

In terms of biological role, binds the lower part of the 30S subunit head. Binds mRNA in the 70S ribosome, positioning it for translation. The chain is Small ribosomal subunit protein uS3 from Rickettsia canadensis (strain McKiel).